The primary structure comprises 363 residues: Fructose-bisphosphate aldolase A (363 aa).

Arg-43 is a binding site for beta-D-fructose 1,6-bisphosphate. Catalysis depends on Glu-188, which acts as the Proton acceptor. Lys-230 acts as the Schiff-base intermediate with dihydroxyacetone-P in catalysis. Residues 272–274 (SGG), Ser-301, and Arg-304 contribute to the beta-D-fructose 1,6-bisphosphate site.

It belongs to the class I fructose-bisphosphate aldolase family. Tetramer.

It catalyses the reaction beta-D-fructose 1,6-bisphosphate = D-glyceraldehyde 3-phosphate + dihydroxyacetone phosphate. It participates in carbohydrate degradation; glycolysis; D-glyceraldehyde 3-phosphate and glycerone phosphate from D-glucose: step 4/4. In terms of biological role, plays a key role in glycolysis and gluconeogenesis. The polypeptide is Fructose-bisphosphate aldolase A (Salmo salar (Atlantic salmon)).